We begin with the raw amino-acid sequence, 365 residues long: Neuronal migration protein doublecortin (365 aa).

S28 carries the post-translational modification Phosphoserine; by CDK5. S47 carries the phosphoserine; by MARK1 and PKA modification. 2 Doublecortin domains span residues 53 to 139 (KKVR…VEYT) and 180 to 263 (KLVT…AQDD). Y70 bears the Phosphotyrosine; by ABL mark. The residue at position 74 (S74) is a Phosphoserine; by PKC. S90 carries the phosphoserine; by CK2 modification. Position 110 is a phosphoserine; by PKC (S110). S115 carries the post-translational modification Phosphoserine; by CK2, MARK1 and PKA. A Phosphoserine; by CK2 modification is found at S265. A disordered region spans residues 275 to 365 (KGNPSATAGP…DDSDSLGDSM (91 aa)). S287 is modified (phosphoserine; by CDK5). T289 carries the phosphothreonine; by CDK5 modification. Residue S294 is modified to Phosphoserine; by PKC. Position 297 is a phosphoserine; by CDK5 (S297). Position 306 is a phosphoserine; by CK2 (S306). S306 carries the post-translational modification Phosphoserine; by DYRK2. Positions 307-341 (PADSGNDQDANGTSSSQLSTPKSKQSPISTPTSPG) are enriched in polar residues. Phosphothreonine; by CDK5 is present on T326. At T326 the chain carries Phosphothreonine; by PKC and MAPK. S332 is modified (phosphoserine; by CDK5). S332 bears the Phosphoserine; by MAPK mark. T336 is modified (phosphothreonine; by MAPK). S339 is modified (phosphoserine; by CDK5). The residue at position 339 (S339) is a Phosphoserine; by MAPK. S342 is modified (phosphoserine; by PKC). Phosphoserine; by CK2 is present on residues S354 and S360. Acidic residues predominate over residues 356–365 (DDSDSLGDSM).

In terms of assembly, interacts with tubulin. Interacts with USP9X. In terms of processing, phosphorylation by MARK1, MARK2 and PKA regulates its ability to bind microtubules. Phosphorylation at Ser-265 and Ser-297 seems to occur only in neonatal brain, the levels falling precipitously by postnatal day 21. Post-translationally, ubiquitinated by MDM2, leading to its degradation by the proteasome. Ubiquitinated by MDM2 and subsequent degradation leads to reduce the dendritic spine density of olfactory bulb granule cells.

It is found in the cytoplasm. The protein localises to the cell projection. Its subcellular location is the neuron projection. Its function is as follows. Microtubule-associated protein required for initial steps of neuronal dispersion and cortex lamination during cerebral cortex development. May act by competing with the putative neuronal protein kinase DCLK1 in binding to a target protein. May in that way participate in a signaling pathway that is crucial for neuronal interaction before and during migration, possibly as part of a calcium ion-dependent signal transduction pathway. May participate along with PAFAH1B1/LIS-1 in a distinct overlapping signaling pathway that promotes neuronal migration. The protein is Neuronal migration protein doublecortin (Dcx) of Rattus norvegicus (Rat).